The following is a 435-amino-acid chain: ATP-dependent RNA helicase RhlB (435 aa).

Residues 9–37 (QKFADLGLNPQVVEGLEKKGFEFCTPIQA) carry the Q motif motif. The 180-residue stretch at 40-219 (LPVLLSGQDI…FEHMHNPEHV (180 aa)) folds into the Helicase ATP-binding domain. 53–60 (AQTGTGKT) contributes to the ATP binding site. The DEAD box motif lies at 165 to 168 (DEAD). The 146-residue stretch at 245–390 (ALLQTLIEEE…VSDYDSSALI (146 aa)) folds into the Helicase C-terminal domain. A disordered region spans residues 395–435 (APVRTPSARNQQRRTNTGGARSGDRKSNNRRPRQPRQHKEA). Polar residues predominate over residues 401-413 (SARNQQRRTNTGG). Positions 422–435 (NNRRPRQPRQHKEA) are enriched in basic residues.

This sequence belongs to the DEAD box helicase family. RhlB subfamily. As to quaternary structure, component of the RNA degradosome, which is a multiprotein complex involved in RNA processing and mRNA degradation.

The protein resides in the cytoplasm. The enzyme catalyses ATP + H2O = ADP + phosphate + H(+). Functionally, DEAD-box RNA helicase involved in RNA degradation. Has RNA-dependent ATPase activity and unwinds double-stranded RNA. The chain is ATP-dependent RNA helicase RhlB from Vibrio vulnificus (strain YJ016).